The sequence spans 183 residues: Ribosome rescue factor SmrB (183 aa).

The Smr domain occupies 98–173 (LDLHGLTQLQ…GDAALLVLIE (76 aa)).

This sequence belongs to the SmrB family. In terms of assembly, associates with collided ribosomes, but not with correctly translating polysomes.

Functionally, acts as a ribosome collision sensor. Detects stalled/collided disomes (pairs of ribosomes where the leading ribosome is stalled and a second ribosome has collided with it) and endonucleolytically cleaves mRNA at the 5' boundary of the stalled ribosome. Stalled/collided disomes form a new interface (primarily via the 30S subunits) that binds SmrB. Cleaved mRNA becomes available for tmRNA ligation, leading to ribosomal subunit dissociation and rescue of stalled ribosomes. In Shigella boydii serotype 18 (strain CDC 3083-94 / BS512), this protein is Ribosome rescue factor SmrB.